A 422-amino-acid polypeptide reads, in one-letter code: 5'-deoxyadenosine deaminase (422 aa).

2 residues coordinate Zn(2+): His-57 and His-59. The substrate site is built by Glu-86 and His-178. Residue His-205 participates in Zn(2+) binding. Residues Glu-208 and Asp-294 each contribute to the substrate site. Asp-294 contributes to the Zn(2+) binding site.

It belongs to the metallo-dependent hydrolases superfamily. MTA/SAH deaminase family. As to quaternary structure, homotetramer. Requires Zn(2+) as cofactor.

The enzyme catalyses 5'-deoxyadenosine + H2O + H(+) = 5'-deoxyinosine + NH4(+). It catalyses the reaction S-adenosyl-L-homocysteine + H2O + H(+) = S-inosyl-L-homocysteine + NH4(+). It carries out the reaction S-methyl-5'-thioadenosine + H2O + H(+) = S-methyl-5'-thioinosine + NH4(+). The catalysed reaction is adenosine + H2O + H(+) = inosine + NH4(+). It functions in the pathway amino-acid biosynthesis; S-adenosyl-L-methionine biosynthesis. Its function is as follows. Catalyzes the deamination of three SAM-derived enzymatic products, namely 5'-deoxyadenosine, S-adenosyl-L-homocysteine, and 5'-methylthioadenosine, to produce the inosine analogs. Can also deaminate adenosine. The preferred substrate for this enzyme is 5'-deoxyadenosine, but all these substrates are efficiently deaminated. Likely functions in a S-adenosyl-L-methionine (SAM) recycling pathway from S-adenosyl-L-homocysteine (SAH) produced from SAM-dependent methylation reactions. May also be involved in the recycling of 5'-deoxyadenosine, whereupon the 5'-deoxyribose moiety of 5'-deoxyinosine is further metabolized to deoxyhexoses used for the biosynthesis of aromatic amino acids in methanogens. This is 5'-deoxyadenosine deaminase from Methanococcus maripaludis (strain C6 / ATCC BAA-1332).